Consider the following 729-residue polypeptide: Phosphoribosylformylglycinamidine synthase subunit PurL (729 aa).

H42 is an active-site residue. Y45 and K84 together coordinate ATP. E86 contacts Mg(2+). Substrate contacts are provided by residues 87-90 (SHNH) and R109. The active-site Proton acceptor is H88. D110 serves as a coordination point for Mg(2+). Q238 contacts substrate. Residue D266 participates in Mg(2+) binding. 310-312 (ESQ) contributes to the substrate binding site. The ATP site is built by D492 and G529. Residue N530 participates in Mg(2+) binding. A substrate-binding site is contributed by S532.

Belongs to the FGAMS family. As to quaternary structure, monomer. Part of the FGAM synthase complex composed of 1 PurL, 1 PurQ and 2 PurS subunits.

The protein resides in the cytoplasm. It carries out the reaction N(2)-formyl-N(1)-(5-phospho-beta-D-ribosyl)glycinamide + L-glutamine + ATP + H2O = 2-formamido-N(1)-(5-O-phospho-beta-D-ribosyl)acetamidine + L-glutamate + ADP + phosphate + H(+). It functions in the pathway purine metabolism; IMP biosynthesis via de novo pathway; 5-amino-1-(5-phospho-D-ribosyl)imidazole from N(2)-formyl-N(1)-(5-phospho-D-ribosyl)glycinamide: step 1/2. In terms of biological role, part of the phosphoribosylformylglycinamidine synthase complex involved in the purines biosynthetic pathway. Catalyzes the ATP-dependent conversion of formylglycinamide ribonucleotide (FGAR) and glutamine to yield formylglycinamidine ribonucleotide (FGAM) and glutamate. The FGAM synthase complex is composed of three subunits. PurQ produces an ammonia molecule by converting glutamine to glutamate. PurL transfers the ammonia molecule to FGAR to form FGAM in an ATP-dependent manner. PurS interacts with PurQ and PurL and is thought to assist in the transfer of the ammonia molecule from PurQ to PurL. The protein is Phosphoribosylformylglycinamidine synthase subunit PurL of Campylobacter concisus (strain 13826).